The following is a 423-amino-acid chain: Maintenance of mitochondrial morphology protein 1 (423 aa).

The Lumenal segment spans residues 1–20 (MTIPAPIPDKAESSLSFTQG). The helical transmembrane segment at 21 to 41 (LLLGQLSIVILIGAFIKFFIF) threads the bilayer. Topologically, residues 42–423 (GDPPSPDVTA…PGSMPGLSMT (382 aa)) are cytoplasmic. The 213-residue stretch at 115–327 (QPESLDWFNV…EPRFQQIELP (213 aa)) folds into the SMP-LTD domain. 2 disordered regions span residues 332 to 372 (RKKN…KEVE) and 387 to 423 (SLDVPDEGSEDGLRFRRKSKGRDEYAMPGSMPGLSMT). Basic and acidic residues predominate over residues 355-372 (RSRDVERDLREEARKEVE).

Belongs to the MMM1 family. In terms of assembly, homodimer. Component of the ER-mitochondria encounter structure (ERMES) or MDM complex, composed of MMM1, MDM10, MDM12 and MDM34. An MMM1 homodimer associates with one molecule of MDM12 on each side in a pairwise head-to-tail manner, and the SMP-LTD domains of MMM1 and MDM12 generate a continuous hydrophobic tunnel for phospholipid trafficking.

It localises to the endoplasmic reticulum membrane. Its function is as follows. Component of the ERMES/MDM complex, which serves as a molecular tether to connect the endoplasmic reticulum (ER) and mitochondria. Components of this complex are involved in the control of mitochondrial shape and protein biogenesis, and function in nonvesicular lipid trafficking between the ER and mitochondria. The MDM12-MMM1 subcomplex functions in the major beta-barrel assembly pathway that is responsible for biogenesis of all outer membrane beta-barrel proteins, and acts in a late step after the SAM complex. The MDM10-MDM12-MMM1 subcomplex further acts in the TOM40-specific pathway after the action of the MDM12-MMM1 complex. Essential for establishing and maintaining the structure of mitochondria and maintenance of mtDNA nucleoids. The polypeptide is Maintenance of mitochondrial morphology protein 1 (Botryotinia fuckeliana (strain B05.10) (Noble rot fungus)).